The chain runs to 87 residues: Small ribosomal subunit protein uS15c (87 aa).

Belongs to the universal ribosomal protein uS15 family. In terms of assembly, part of the 30S ribosomal subunit.

It is found in the plastid. The protein localises to the chloroplast. This chain is Small ribosomal subunit protein uS15c (rps15), found in Oenothera glazioviana (Large-flowered evening primrose).